We begin with the raw amino-acid sequence, 411 residues long: Phospholipase ABHD3 (411 aa).

A helical; Signal-anchor for type II membrane protein transmembrane segment spans residues 25–45 (VGFFGSGVGLSLILGFSVAYA). One can recognise an AB hydrolase-1 domain in the interval 140 to 233 (PTILLLPGLT…MLLLNYLGKI (94 aa)). Active-site charge relay system residues include Ser220, Asp346, and His375.

This sequence belongs to the AB hydrolase superfamily. AB hydrolase 4 family. As to expression, widely expressed with higher expression in liver.

The protein resides in the membrane. The enzyme catalyses a 1,2-diacyl-sn-glycero-3-phosphocholine + H2O = a 1-acyl-sn-glycero-3-phosphocholine + a fatty acid + H(+). It catalyses the reaction a 1,2-diacyl-sn-glycero-3-phosphocholine + H2O = a 2-acyl-sn-glycero-3-phosphocholine + a fatty acid + H(+). It carries out the reaction 1-tetradecanoyl-2-(9Z,12Z-octadecadienoyl)-sn-glycero-3-phosphocholine + H2O = 2-(9Z,12Z-octadecadienoyl)-sn-glycero-3-phosphocholine + tetradecanoate + H(+). The catalysed reaction is 1-tetradecanoyl-2-(9Z,12Z-octadecadienoyl)-sn-glycero-3-phosphocholine + H2O = 1-tetradecanoyl-sn-glycero-3-phosphocholine + (9Z,12Z)-octadecadienoate + H(+). The enzyme catalyses 1-tetradecanoyl-2-(5Z,8Z,11Z,14Z-eicosatetraenoyl)-sn-glycero-3-phosphocholine + H2O = 2-(5Z,8Z,11Z,14Z)-eicosatetraenoyl-sn-glycero-3-phosphocholine + tetradecanoate + H(+). It catalyses the reaction 1-tetradecanoyl-2-(4Z,7Z,10Z,13Z,16Z,19Z-docosahexaenoyl)-sn-glycero-3-phosphocholine + H2O = 2-(4Z,7Z,10Z,13Z,16Z,19Z-docosahexaenoyl)-sn-glycero-3-phosphocholine + tetradecanoate + H(+). It carries out the reaction 1,2-ditetradecanoyl-sn-glycero-3-phosphocholine + H2O = 2-tetradecanoyl-sn-glycero-3-phosphocholine + tetradecanoate + H(+). The catalysed reaction is 1-octadecanoyl-2-acetyl-sn-glycero-3-phosphocholine + H2O = 1-octadecanoyl-sn-glycero-3-phosphocholine + acetate + H(+). The enzyme catalyses 1,2-ditetradecanoyl-sn-glycero-3-phosphocholine + H2O = 1-tetradecanoyl-sn-glycero-3-phosphocholine + tetradecanoate + H(+). It catalyses the reaction 1-octadecanoyl-2-pentanoyl-sn-glycero-3-phosphocholine + H2O = pentanoate + 1-octadecanoyl-sn-glycero-3-phosphocholine + H(+). It carries out the reaction 1-octadecanoyl-2-hexanoyl-sn-glycero-3-phosphocholine + H2O = hexanoate + 1-octadecanoyl-sn-glycero-3-phosphocholine + H(+). The catalysed reaction is 1-octadecanoyl-2-octanoyl-sn-glycero-3-phosphocholine + H2O = 1-octadecanoyl-sn-glycero-3-phosphocholine + octanoate + H(+). The enzyme catalyses 1-octadecanoyl-2-nonanoyl-sn-glycero-3-phosphocholine + H2O = nonanoate + 1-octadecanoyl-sn-glycero-3-phosphocholine + H(+). It catalyses the reaction 1-O-hexadecyl-2-nonadioyl-sn-glycero-3-phosphocholine + H2O = nonanedioate + 1-O-hexadecyl-sn-glycero-3-phosphocholine + H(+). It carries out the reaction 1-hexadecanoyl-2-nonadioyl-sn-glycero-3-phosphocholine + H2O = nonanedioate + 1-hexadecanoyl-sn-glycero-3-phosphocholine + H(+). The catalysed reaction is 1-hexadecanoyl-2-(9-oxononanoyl)-sn-glycero-3-phosphocholine + H2O = 9-oxononanoate + 1-hexadecanoyl-sn-glycero-3-phosphocholine + H(+). The enzyme catalyses 1-hexadecanoyl-2-(5-oxopentanoyl)-sn-glycero-3-phosphocholine + H2O = 5-oxopentanoate + 1-hexadecanoyl-sn-glycero-3-phosphocholine + H(+). It catalyses the reaction 1-hexadecanoyl-2-glutaroyl-sn-glycero-3-phosphocholine + H2O = glutarate + 1-hexadecanoyl-sn-glycero-3-phosphocholine + H(+). It carries out the reaction 1-O-hexadecyl-2-acetyl-sn-glycero-3-phosphocholine + H2O = 1-O-hexadecyl-sn-glycero-3-phosphocholine + acetate + H(+). Its function is as follows. Phospholipase that may play a role in phospholipids remodeling. May selectively cleave myristate (C14)-containing phosphatidylcholines through its predominant phospholipase 1 activity, cleaving preferentially acyl groups in sn1 position. In parallel, may have a minor phospholipase 2 activity acting on acyl groups in position sn2. In addition to (C14)-containing phosphatidylcholines, may also act on other medium-chain-containing and oxidatively truncated phospholipids. This is Phospholipase ABHD3 from Mus musculus (Mouse).